The chain runs to 275 residues: 2,3,4,5-tetrahydropyridine-2,6-dicarboxylate N-succinyltransferase (275 aa).

This sequence belongs to the transferase hexapeptide repeat family.

It is found in the cytoplasm. It catalyses the reaction (S)-2,3,4,5-tetrahydrodipicolinate + succinyl-CoA + H2O = (S)-2-succinylamino-6-oxoheptanedioate + CoA. It participates in amino-acid biosynthesis; L-lysine biosynthesis via DAP pathway; LL-2,6-diaminopimelate from (S)-tetrahydrodipicolinate (succinylase route): step 1/3. In Paraburkholderia phytofirmans (strain DSM 17436 / LMG 22146 / PsJN) (Burkholderia phytofirmans), this protein is 2,3,4,5-tetrahydropyridine-2,6-dicarboxylate N-succinyltransferase.